We begin with the raw amino-acid sequence, 344 residues long: tRNA N6-adenosine threonylcarbamoyltransferase (344 aa).

Residues His111 and His115 each coordinate Fe cation. Residues 134–138, Asp167, Gly180, and Asn273 contribute to the substrate site; that span reads LVSGG. Fe cation is bound at residue Asp301.

It belongs to the KAE1 / TsaD family. It depends on Fe(2+) as a cofactor.

The protein resides in the cytoplasm. It carries out the reaction L-threonylcarbamoyladenylate + adenosine(37) in tRNA = N(6)-L-threonylcarbamoyladenosine(37) in tRNA + AMP + H(+). Required for the formation of a threonylcarbamoyl group on adenosine at position 37 (t(6)A37) in tRNAs that read codons beginning with adenine. Is involved in the transfer of the threonylcarbamoyl moiety of threonylcarbamoyl-AMP (TC-AMP) to the N6 group of A37, together with TsaE and TsaB. TsaD likely plays a direct catalytic role in this reaction. The protein is tRNA N6-adenosine threonylcarbamoyltransferase of Cupriavidus pinatubonensis (strain JMP 134 / LMG 1197) (Cupriavidus necator (strain JMP 134)).